Here is a 702-residue protein sequence, read N- to C-terminus: Elongation factor G (702 aa).

The 283-residue stretch at 8 to 290 (SRYRNIGISA…AIIEFLPAPN (283 aa)) folds into the tr-type G domain. Residues 17–24 (AHIDAGKT), 88–92 (DTPGH), and 142–145 (NKMD) contribute to the GTP site.

The protein belongs to the TRAFAC class translation factor GTPase superfamily. Classic translation factor GTPase family. EF-G/EF-2 subfamily.

The protein resides in the cytoplasm. In terms of biological role, catalyzes the GTP-dependent ribosomal translocation step during translation elongation. During this step, the ribosome changes from the pre-translocational (PRE) to the post-translocational (POST) state as the newly formed A-site-bound peptidyl-tRNA and P-site-bound deacylated tRNA move to the P and E sites, respectively. Catalyzes the coordinated movement of the two tRNA molecules, the mRNA and conformational changes in the ribosome. The protein is Elongation factor G of Buchnera aphidicola subsp. Acyrthosiphon pisum (strain 5A).